A 525-amino-acid polypeptide reads, in one-letter code: Glutamate--cysteine ligase (525 aa).

This sequence belongs to the glutamate--cysteine ligase type 1 family. Type 1 subfamily.

It carries out the reaction L-cysteine + L-glutamate + ATP = gamma-L-glutamyl-L-cysteine + ADP + phosphate + H(+). Its pathway is sulfur metabolism; glutathione biosynthesis; glutathione from L-cysteine and L-glutamate: step 1/2. In Pseudoalteromonas translucida (strain TAC 125), this protein is Glutamate--cysteine ligase.